A 173-amino-acid polypeptide reads, in one-letter code: MDMNMEKIFEDSVPCRVRAKRGCATHPRSIAERAAMMMIRSGGSGGSGGVSCQDFGNQAKKDCSHMRCRTCCKSRGFECSTHVRSTWVPATKRRERQQQLATVQPQTQLPRGESVPKRHRENLPATSSSLVCTRIPFHSGICHCNVKYLFMCIYICLLLYGREIYNEMQAAFL.

Zn(2+) is bound by residues C52, C63, C68, C72, and C79. A DNA-binding region (zn(2)-C6 fungal-type; degenerate) is located at residues 52–79 (CQDFGNQAKKDCSHMRCRTCCKSRGFEC). Residues 100-110 (LATVQPQTQLP) are compositionally biased toward low complexity. Residues 100 to 121 (LATVQPQTQLPRGESVPKRHRE) are disordered.

It belongs to the SHI protein family.

It localises to the nucleus. Functionally, transcription activator that binds DNA on 5'-ACTCTAC-3' and promotes auxin homeostasis-regulating gene expression (e.g. YUC genes), as well as genes affecting stamen development, cell expansion and timing of flowering. Synergistically with other SHI-related proteins, regulates gynoecium, stamen and leaf development in a dose-dependent manner, controlling apical-basal patterning. Promotes style and stigma formation, and influence vascular development during gynoecium development. May also have a role in the formation and/or maintenance of the shoot apical meristem (SAM). In Arabidopsis thaliana (Mouse-ear cress), this protein is Protein SHI RELATED SEQUENCE 8 (SRS8).